A 912-amino-acid chain; its full sequence is Protein translocase subunit SecA (912 aa).

Residues glutamine 87, 105–109, and aspartate 508 each bind ATP; that span reads GEGKT. A disordered region spans residues 869–912; the sequence is EQMQGGNAPVPVSQVTRDEPKVGRNDPCPCGSGKKYKHCHGQLS. Cysteine 896, cysteine 898, cysteine 907, and histidine 908 together coordinate Zn(2+). A compositionally biased stretch (basic residues) spans 902-912; that stretch reads KKYKHCHGQLS.

It belongs to the SecA family. Monomer and homodimer. Part of the essential Sec protein translocation apparatus which comprises SecA, SecYEG and auxiliary proteins SecDF-YajC and YidC. Zn(2+) serves as cofactor.

It localises to the cell inner membrane. The protein localises to the cytoplasm. It catalyses the reaction ATP + H2O + cellular proteinSide 1 = ADP + phosphate + cellular proteinSide 2.. Its function is as follows. Part of the Sec protein translocase complex. Interacts with the SecYEG preprotein conducting channel. Has a central role in coupling the hydrolysis of ATP to the transfer of proteins into and across the cell membrane, serving both as a receptor for the preprotein-SecB complex and as an ATP-driven molecular motor driving the stepwise translocation of polypeptide chains across the membrane. In Xanthomonas axonopodis pv. citri (strain 306), this protein is Protein translocase subunit SecA.